A 158-amino-acid chain; its full sequence is Phosphopantetheine adenylyltransferase (158 aa).

Residue T9 coordinates substrate. Residues 9–10 (TF) and H17 each bind ATP. Substrate is bound by residues K41, L73, and R87. ATP-binding positions include 88–90 (GVR), E98, and 123–129 (WSYVSST).

The protein belongs to the bacterial CoaD family. Homohexamer. The cofactor is Mg(2+).

The protein resides in the cytoplasm. It carries out the reaction (R)-4'-phosphopantetheine + ATP + H(+) = 3'-dephospho-CoA + diphosphate. It participates in cofactor biosynthesis; coenzyme A biosynthesis; CoA from (R)-pantothenate: step 4/5. Reversibly transfers an adenylyl group from ATP to 4'-phosphopantetheine, yielding dephospho-CoA (dPCoA) and pyrophosphate. The polypeptide is Phosphopantetheine adenylyltransferase (Pasteurella multocida (strain Pm70)).